The primary structure comprises 1047 residues: Carbamoyl phosphate synthase arginine-specific large chain (1047 aa).

The tract at residues 1-401 (MPKRTDIQSV…GLQKAVRSLE (401 aa)) is carboxyphosphate synthetic domain. Positions 129, 169, 175, 176, 208, 210, 215, 241, 242, 243, 284, and 298 each coordinate ATP. Residues 133–327 (RQLMHELHEP…IARMAAKLSL (195 aa)) form the ATP-grasp 1 domain. Residues Gln284, Glu298, and Asn300 each coordinate Mg(2+). Residues Gln284, Glu298, and Asn300 each contribute to the Mn(2+) site. Residues 402–549 (IKTHGLSLPS…YSSWTGENDL (148 aa)) are oligomerization domain. The segment at 550 to 933 (LLPEKAKERV…AFRKAFAWGE (384 aa)) is carbamoyl phosphate synthetic domain. Residues 676-865 (YEFMRSVEVP…LITYTIDVLF (190 aa)) enclose the ATP-grasp 2 domain. ATP-binding residues include Arg712, Ala750, Glu756, Gly781, Val782, His783, Ser784, Gln824, and Glu836. Gln824, Glu836, and Asn838 together coordinate Mg(2+). Gln824, Glu836, and Asn838 together coordinate Mn(2+). The tract at residues 934–1047 (EQTPALFRKK…PFLLPDVVMN (114 aa)) is allosteric domain. The MGS-like domain maps to 937–1047 (PALFRKKGSV…PFLLPDVVMN (111 aa)).

Belongs to the CarB family. Composed of two chains; the small (or glutamine) chain promotes the hydrolysis of glutamine to ammonia, which is used by the large (or ammonia) chain to synthesize carbamoyl phosphate. Tetramer of heterodimers (alpha,beta)4. Requires Mg(2+) as cofactor. Mn(2+) serves as cofactor.

The enzyme catalyses hydrogencarbonate + L-glutamine + 2 ATP + H2O = carbamoyl phosphate + L-glutamate + 2 ADP + phosphate + 2 H(+). It catalyses the reaction hydrogencarbonate + NH4(+) + 2 ATP = carbamoyl phosphate + 2 ADP + phosphate + 2 H(+). The protein operates within amino-acid biosynthesis; L-arginine biosynthesis; carbamoyl phosphate from bicarbonate: step 1/1. In terms of biological role, large subunit of the glutamine-dependent carbamoyl phosphate synthetase (CPSase). CPSase catalyzes the formation of carbamoyl phosphate from the ammonia moiety of glutamine, carbonate, and phosphate donated by ATP, constituting the first step of the biosynthetic pathway leading to arginine and/or urea. The large subunit (synthetase) binds the substrates ammonia (free or transferred from glutamine from the small subunit), hydrogencarbonate and ATP and carries out an ATP-coupled ligase reaction, activating hydrogencarbonate by forming carboxy phosphate which reacts with ammonia to form carbamoyl phosphate. The protein is Carbamoyl phosphate synthase arginine-specific large chain of Halalkalibacterium halodurans (strain ATCC BAA-125 / DSM 18197 / FERM 7344 / JCM 9153 / C-125) (Bacillus halodurans).